A 182-amino-acid polypeptide reads, in one-letter code: PRA1 family protein D (182 aa).

At Ala-2 the chain carries N-acetylalanine. 3 consecutive transmembrane segments (helical) span residues 68-88 (LITR…WFFL), 107-127 (IVAV…GVWL), and 129-149 (ALTT…LRGT). A disordered region spans residues 163–182 (PMLSTSGGGNDGARGDYSGI).

Belongs to the PRA1 family. Interacts with PRA1F2 and PRA1F3. Interacts with the cauliflower mosaic virus (CaMV) movement protein (via N-terminus). Expressed in hypocotyls, roots, lateral roots, lateral root caps, columella cells, leaves, shoot apex, stems and flowers.

Its subcellular location is the endosome membrane. May be involved in both secretory and endocytic intracellular trafficking in the endosomal/prevacuolar compartments. The sequence is that of PRA1 family protein D (PRA1D) from Arabidopsis thaliana (Mouse-ear cress).